The sequence spans 212 residues: Transcriptional regulator GfcR (212 aa).

This sequence belongs to the purine/pyrimidine phosphoribosyltransferase family. GfcR subfamily.

In terms of biological role, DNA-binding transcriptional regulator that functions as a regulator of central sugar catabolic pathways. The polypeptide is Transcriptional regulator GfcR (Halobacterium salinarum (strain ATCC 29341 / DSM 671 / R1)).